The chain runs to 511 residues: GMP synthase [glutamine-hydrolyzing] (511 aa).

One can recognise a Glutamine amidotransferase type-1 domain in the interval 5–195 (AILVLDFGSQ…VFKICQAQIN (191 aa)). Cysteine 82 functions as the Nucleophile in the catalytic mechanism. Catalysis depends on residues histidine 169 and glutamate 171. The GMPS ATP-PPase domain occupies 196–386 (WSLEGNLETI…LGIKKESLYR (191 aa)). ATP is bound at residue 223–229 (SGGTDSL).

As to quaternary structure, homodimer.

The enzyme catalyses XMP + L-glutamine + ATP + H2O = GMP + L-glutamate + AMP + diphosphate + 2 H(+). Its pathway is purine metabolism; GMP biosynthesis; GMP from XMP (L-Gln route): step 1/1. Functionally, catalyzes the synthesis of GMP from XMP. This chain is GMP synthase [glutamine-hydrolyzing] (guaA), found in Borreliella burgdorferi (strain ATCC 35210 / DSM 4680 / CIP 102532 / B31) (Borrelia burgdorferi).